We begin with the raw amino-acid sequence, 61 residues long: Large ribosomal subunit protein bL28 (61 aa).

The protein belongs to the bacterial ribosomal protein bL28 family.

The sequence is that of Large ribosomal subunit protein bL28 from Lactobacillus gasseri (strain ATCC 33323 / DSM 20243 / BCRC 14619 / CIP 102991 / JCM 1131 / KCTC 3163 / NCIMB 11718 / NCTC 13722 / AM63).